A 151-amino-acid polypeptide reads, in one-letter code: 6,7-dimethyl-8-ribityllumazine synthase (151 aa).

Residues Phe-23, 55 to 57, and 79 to 81 each bind 5-amino-6-(D-ribitylamino)uracil; these read AYE and AVI. 84–85 serves as a coordination point for (2S)-2-hydroxy-3-oxobutyl phosphate; the sequence is AT. Catalysis depends on His-87, which acts as the Proton donor. Phe-111 contributes to the 5-amino-6-(D-ribitylamino)uracil binding site. (2S)-2-hydroxy-3-oxobutyl phosphate is bound at residue Arg-125.

The protein belongs to the DMRL synthase family.

The enzyme catalyses (2S)-2-hydroxy-3-oxobutyl phosphate + 5-amino-6-(D-ribitylamino)uracil = 6,7-dimethyl-8-(1-D-ribityl)lumazine + phosphate + 2 H2O + H(+). The protein operates within cofactor biosynthesis; riboflavin biosynthesis; riboflavin from 2-hydroxy-3-oxobutyl phosphate and 5-amino-6-(D-ribitylamino)uracil: step 1/2. Functionally, catalyzes the formation of 6,7-dimethyl-8-ribityllumazine by condensation of 5-amino-6-(D-ribitylamino)uracil with 3,4-dihydroxy-2-butanone 4-phosphate. This is the penultimate step in the biosynthesis of riboflavin. This chain is 6,7-dimethyl-8-ribityllumazine synthase, found in Leptospira interrogans serogroup Icterohaemorrhagiae serovar copenhageni (strain Fiocruz L1-130).